A 28-amino-acid chain; its full sequence is Conotoxin as14b (28 aa).

2 disulfide bridges follow: cysteine 7–cysteine 27 and cysteine 11–cysteine 23.

Belongs to the conotoxin L superfamily. As to expression, expressed by the venom duct.

It is found in the secreted. In vivo, intracranial injection elicits scratching and grooming activity in mice, and causes body and rear limb extension and tail curling immediately upon injection. This is Conotoxin as14b from Conus cancellatus (Cancellate cone).